The primary structure comprises 284 residues: Small ribosomal subunit protein uS2 (284 aa).

The protein belongs to the universal ribosomal protein uS2 family.

This chain is Small ribosomal subunit protein uS2 (rpsB), found in Mycoplasma genitalium (strain ATCC 33530 / DSM 19775 / NCTC 10195 / G37) (Mycoplasmoides genitalium).